Reading from the N-terminus, the 606-residue chain is Arginine--tRNA ligase (606 aa).

A 'HIGH' region motif is present at residues Pro126–His136.

It belongs to the class-I aminoacyl-tRNA synthetase family. As to quaternary structure, monomer.

Its subcellular location is the cytoplasm. The catalysed reaction is tRNA(Arg) + L-arginine + ATP = L-arginyl-tRNA(Arg) + AMP + diphosphate. The polypeptide is Arginine--tRNA ligase (Phocaeicola vulgatus (strain ATCC 8482 / DSM 1447 / JCM 5826 / CCUG 4940 / NBRC 14291 / NCTC 11154) (Bacteroides vulgatus)).